A 214-amino-acid chain; its full sequence is Large ribosomal subunit protein bL25 (214 aa).

The segment at 179 to 214 is disordered; that stretch reads VPPTQGPSEAEIEEVEAGDADTPEPEVVGEKEEDEE. Over residues 188–202 the composition is skewed to acidic residues; sequence AEIEEVEAGDADTPE.

It belongs to the bacterial ribosomal protein bL25 family. CTC subfamily. Part of the 50S ribosomal subunit; part of the 5S rRNA/L5/L18/L25 subcomplex. Contacts the 5S rRNA. Binds to the 5S rRNA independently of L5 and L18.

Functionally, this is one of the proteins that binds to the 5S RNA in the ribosome where it forms part of the central protuberance. The protein is Large ribosomal subunit protein bL25 of Staphylococcus carnosus (strain TM300).